Consider the following 423-residue polypeptide: Gamma-glutamyl phosphate reductase (423 aa).

This sequence belongs to the gamma-glutamyl phosphate reductase family.

It is found in the cytoplasm. It catalyses the reaction L-glutamate 5-semialdehyde + phosphate + NADP(+) = L-glutamyl 5-phosphate + NADPH + H(+). It participates in amino-acid biosynthesis; L-proline biosynthesis; L-glutamate 5-semialdehyde from L-glutamate: step 2/2. Its function is as follows. Catalyzes the NADPH-dependent reduction of L-glutamate 5-phosphate into L-glutamate 5-semialdehyde and phosphate. The product spontaneously undergoes cyclization to form 1-pyrroline-5-carboxylate. This chain is Gamma-glutamyl phosphate reductase, found in Burkholderia lata (strain ATCC 17760 / DSM 23089 / LMG 22485 / NCIMB 9086 / R18194 / 383).